A 187-amino-acid chain; its full sequence is Large ribosomal subunit protein uL6 (187 aa).

It belongs to the universal ribosomal protein uL6 family. In terms of assembly, part of the 50S ribosomal subunit.

Its function is as follows. This protein binds to the 23S rRNA, and is important in its secondary structure. It is located near the subunit interface in the base of the L7/L12 stalk, and near the tRNA binding site of the peptidyltransferase center. In Chloroflexus aggregans (strain MD-66 / DSM 9485), this protein is Large ribosomal subunit protein uL6.